Consider the following 313-residue polypeptide: Dihydroorotate dehydrogenase B (NAD(+)), catalytic subunit (313 aa).

FMN contacts are provided by residues serine 21 and lysine 45–alanine 46. Residues lysine 45 and asparagine 69–leucine 73 each bind substrate. The FMN site is built by asparagine 99 and asparagine 127. A substrate-binding site is contributed by asparagine 127. The active-site Nucleophile is cysteine 130. The FMN site is built by lysine 165 and isoleucine 191. Substrate is bound at residue asparagine 192–threonine 193. Residues glycine 217, glycine 243–glycine 244, and glycine 265–threonine 266 contribute to the FMN site.

It belongs to the dihydroorotate dehydrogenase family. Type 1 subfamily. In terms of assembly, heterotetramer of 2 PyrK and 2 PyrD type B subunits. FMN is required as a cofactor.

The protein localises to the cytoplasm. It catalyses the reaction (S)-dihydroorotate + NAD(+) = orotate + NADH + H(+). The protein operates within pyrimidine metabolism; UMP biosynthesis via de novo pathway; orotate from (S)-dihydroorotate (NAD(+) route): step 1/1. Catalyzes the conversion of dihydroorotate to orotate with NAD(+) as electron acceptor. This Geobacillus sp. (strain WCH70) protein is Dihydroorotate dehydrogenase B (NAD(+)), catalytic subunit (pyrD).